The following is a 192-amino-acid chain: dTTP/UTP pyrophosphatase (192 aa).

Aspartate 71 serves as the catalytic Proton acceptor.

The protein belongs to the Maf family. YhdE subfamily. A divalent metal cation is required as a cofactor.

It is found in the cytoplasm. The catalysed reaction is dTTP + H2O = dTMP + diphosphate + H(+). It carries out the reaction UTP + H2O = UMP + diphosphate + H(+). Functionally, nucleoside triphosphate pyrophosphatase that hydrolyzes dTTP and UTP. May have a dual role in cell division arrest and in preventing the incorporation of modified nucleotides into cellular nucleic acids. The sequence is that of dTTP/UTP pyrophosphatase from Clostridium tetani (strain Massachusetts / E88).